Here is a 513-residue protein sequence, read N- to C-terminus: Serine/threonine-protein kinase PBL27 (513 aa).

Residues 1–61 (MSGCLPCFGS…KKELTAPKEG (61 aa)) form a disordered region. 2 S-palmitoyl cysteine lipidation sites follow: Cys4 and Cys7. 2 stretches are compositionally biased toward basic and acidic residues: residues 15–27 (AASK…ELSA) and 38–57 (ISLD…ELTA). A Protein kinase domain is found at 83–360 (FRPECLLGEG…GDVVTALTYL (278 aa)). ATP-binding positions include 89–97 (LGEGGFGRV) and Lys112. The active-site Proton acceptor is the Asp210. Ser244 is modified (phosphoserine; by CERK1). Residues Thr245 and Thr250 each carry the phosphothreonine; by CERK1 modification. The span at 365–378 (FDPNAPSGQNSRSG) shows a compositional bias: polar residues. The disordered stretch occupies residues 365 to 513 (FDPNAPSGQN…GPGSFDSTND (149 aa)). Phosphoserine occurs at positions 392 and 401. Positions 417–428 (NSPDYRRRDMVR) are enriched in basic and acidic residues. Residues 434–446 (SEGGSETGGGSGR) show a composition bias toward gly residues. Residues 456-473 (QESQRGSPASVGRSSRGT) show a composition bias toward polar residues. The span at 475-486 (RNRDLDRERAVA) shows a compositional bias: basic and acidic residues. Residues 504–513 (GPGSFDSTND) are compositionally biased toward polar residues.

This sequence belongs to the protein kinase superfamily. Ser/Thr protein kinase family. As to quaternary structure, interacts with CERK1 (preferentially unphosphorylated) at the plasma membrane. Binds to MAPKKK5 at the plasma membrane; disassociation is induced by chitin perception by the CERK1 complex. Also associates with MAPKKK3. Phosphorylated by CERK1 upon elicitation by chitin. In terms of processing, palmitoylation at Cys-4 and Cys-7 are required for plasma membrane location.

It is found in the cell membrane. The enzyme catalyses L-seryl-[protein] + ATP = O-phospho-L-seryl-[protein] + ADP + H(+). It catalyses the reaction L-threonyl-[protein] + ATP = O-phospho-L-threonyl-[protein] + ADP + H(+). Its function is as follows. Receptor-like cytoplasmic kinase involved in the transduction of signal between the host cell surface chitin receptor complex CERK1-LYK5 and the intracellular MAPKKK5-dependent mitogen-activated protein kinase (MAPK) cascade that leads to chitin-induced immunity. Phosphorylates and activates MAPKKK5 when phosphorylated by CERK1 after elicitation by chitin. This chain is Serine/threonine-protein kinase PBL27, found in Arabidopsis thaliana (Mouse-ear cress).